The chain runs to 334 residues: Syntaxin-18 (334 aa).

Over 1-308 the chain is Cytoplasmic; sequence MAVDITLLFR…EDIREAIKNN (308 aa). Disordered stretches follow at residues 29–50 and 166–225; these read GGAD…GDFS and LSKL…GEDE. 3 stretches are compositionally biased toward basic and acidic residues: residues 33–50, 166–186, and 193–207; these read GSRD…GDFS, LSKL…EKSS, and SEEK…EKPL. The 63-residue stretch at 242–304 folds into the t-SNARE coiled-coil homology domain; it reads IGEMNSLFDE…KEGNEDIREA (63 aa). A helical; Anchor for type IV membrane protein membrane pass occupies residues 309-329; that stretch reads AGFRVWILFFLVMCSFSLLFL. At 330-334 the chain is on the vesicular side; sequence DWYDS.

The protein belongs to the syntaxin family. Component of a SNARE complex consisting of STX18, USE1L, BNIP1/SEC20L, and SEC22B. RINT1/TIP20L and ZW10 are associated with the complex through interaction with BNIP1/SEC20L. Interacts directly with USE1L and BNIP1/SEC20L.

It is found in the endoplasmic reticulum membrane. The protein localises to the golgi apparatus membrane. Its function is as follows. Syntaxin that may be involved in targeting and fusion of Golgi-derived retrograde transport vesicles with the ER. In Rattus norvegicus (Rat), this protein is Syntaxin-18 (Stx18).